A 148-amino-acid chain; its full sequence is Large ribosomal subunit protein bL9 (148 aa).

Belongs to the bacterial ribosomal protein bL9 family.

Its function is as follows. Binds to the 23S rRNA. The chain is Large ribosomal subunit protein bL9 from Agathobacter rectalis (strain ATCC 33656 / DSM 3377 / JCM 17463 / KCTC 5835 / VPI 0990) (Eubacterium rectale).